The sequence spans 192 residues: Ion-translocating oxidoreductase complex subunit B (192 aa).

The interval 1–26 (MNAFWIAVAAVSLLGLAFGAILGYAS) is hydrophobic. The 4Fe-4S domain maps to 32-91 (EDDPVVEKIDEILPQSQCGQCGYPGCRPYAEAISCNGEKINRCAPGGEAVMLKIAELLNV). Residues Cys49, Cys52, Cys57, Cys74, Cys117, Cys120, Cys123, Cys127, Cys147, Cys150, Cys153, and Cys157 each coordinate [4Fe-4S] cluster. 4Fe-4S ferredoxin-type domains lie at 108–137 (MVAV…GATR) and 138–167 (AMHT…LQPV).

It belongs to the 4Fe4S bacterial-type ferredoxin family. RnfB subfamily. In terms of assembly, the complex is composed of six subunits: RsxA, RsxB, RsxC, RsxD, RsxE and RsxG. It depends on [4Fe-4S] cluster as a cofactor.

Its subcellular location is the cell inner membrane. Functionally, part of a membrane-bound complex that couples electron transfer with translocation of ions across the membrane. Required to maintain the reduced state of SoxR. This chain is Ion-translocating oxidoreductase complex subunit B, found in Escherichia coli O6:H1 (strain CFT073 / ATCC 700928 / UPEC).